A 305-amino-acid chain; its full sequence is MNLTKTQRQLHNFLTLAQEAGSLSKLAKLCGYRTPVALYKLKQRLEKQAEDPDARGIRPSLMAKLEKHTGKPKGWLDRKHRERTVPETAAESTGTAETQIAETASAAGCRSVTVNRNTCETQITVSINLDGSGKSRLDTGVPFLEHMIDQIARHGMIDIDISCKGDLHIDDHHTAEDIGITLGQAIRQALGDKKGIRRYGHSYVPLDEALSRVVIDLSGRPGLVYNIEFTRALIGRFDVDLFEEFFHGIVNHSMMTLHIDNLSGKNAHHQAETVFKAFGRALRMAVEHDPRMAGQTPSTKGTLTA.

This sequence belongs to the imidazoleglycerol-phosphate dehydratase family.

It is found in the cytoplasm. The enzyme catalyses D-erythro-1-(imidazol-4-yl)glycerol 3-phosphate = 3-(imidazol-4-yl)-2-oxopropyl phosphate + H2O. It functions in the pathway amino-acid biosynthesis; L-histidine biosynthesis; L-histidine from 5-phospho-alpha-D-ribose 1-diphosphate: step 6/9. This Neisseria meningitidis serogroup C (strain 053442) protein is Imidazoleglycerol-phosphate dehydratase.